The following is a 434-amino-acid chain: GPI mannosyltransferase 2 (434 aa).

Helical transmembrane passes span 22–42 (LSLA…GCPG), 109–129 (ILSF…SVLA), 145–165 (GALI…GAFL), 170–190 (GESL…SSLL), 210–230 (LFSI…LFAF), 252–272 (LGVI…PQWI), 311–331 (YWTL…FLMC), 354–374 (LAAP…VQII), 377–397 (ISSG…SHVA), and 411–431 (IAIQ…GSFL).

Belongs to the PIGV family.

The protein resides in the endoplasmic reticulum membrane. The protein operates within glycolipid biosynthesis; glycosylphosphatidylinositol-anchor biosynthesis. Mannosyltransferase involved in glycosylphosphatidylinositol-anchor biosynthesis. Transfers the second mannose to the glycosylphosphatidylinositol during GPI precursor assembly. The protein is GPI mannosyltransferase 2 (gpi18) of Aspergillus oryzae (strain ATCC 42149 / RIB 40) (Yellow koji mold).